The primary structure comprises 332 residues: 2,3-diketo-L-gulonate reductase (332 aa).

Histidine 44 acts as the Proton donor in catalysis. NAD(+) is bound by residues 168–174 (ITMVDMS), 224–225 (WK), and 304–306 (GHE).

This sequence belongs to the LDH2/MDH2 oxidoreductase family. DlgD subfamily. Homodimer.

The protein localises to the cytoplasm. The enzyme catalyses 3-dehydro-L-gulonate + NAD(+) = 2,3-dioxo-L-gulonate + NADH + H(+). The catalysed reaction is 3-dehydro-L-gulonate + NADP(+) = 2,3-dioxo-L-gulonate + NADPH + H(+). Catalyzes the reduction of 2,3-diketo-L-gulonate in the presence of NADH, to form 3-keto-L-gulonate. This Escherichia coli O1:K1 / APEC protein is 2,3-diketo-L-gulonate reductase.